The primary structure comprises 122 residues: Fluoride-specific ion channel FluC (122 aa).

Transmembrane regions (helical) follow at residues 1 to 21 (MYAF…RHYL), 35 to 55 (WAIL…SAYL), 67 to 87 (FLLT…LNLI), and 98 to 118 (FLNL…GFWL). Na(+)-binding residues include glycine 74 and threonine 77.

The protein belongs to the fluoride channel Fluc/FEX (TC 1.A.43) family.

It is found in the cell inner membrane. The enzyme catalyses fluoride(in) = fluoride(out). Its activity is regulated as follows. Na(+) is not transported, but it plays an essential structural role and its presence is essential for fluoride channel function. In terms of biological role, fluoride-specific ion channel. Important for reducing fluoride concentration in the cell, thus reducing its toxicity. The chain is Fluoride-specific ion channel FluC from Dichelobacter nodosus (strain VCS1703A).